The primary structure comprises 235 residues: MPKLSKRLASLVTKIEDRAYQPLEAIQLVKENATAKFDETMEAHVRLGIDPKYTDQQLRTTVALPQGTGQTVRIAVITRGEKVAEAKAAGAELSGDEDLVEAISKGEMNFDLLIATPDMMPKVAKLGRVLGPRGLMPNPKAGTVTTDLASAIQEFKAGKLEFRADRTGIVHVRFGKASFTAEALLENLKTLQETIDRNKPSGAKGRYWKSLYVTSTMGPSVEVDIALLQDIEQEG.

The protein belongs to the universal ribosomal protein uL1 family. In terms of assembly, part of the 50S ribosomal subunit.

Its function is as follows. Binds directly to 23S rRNA. The L1 stalk is quite mobile in the ribosome, and is involved in E site tRNA release. In terms of biological role, protein L1 is also a translational repressor protein, it controls the translation of the L11 operon by binding to its mRNA. This is Large ribosomal subunit protein uL1 from Synechococcus sp. (strain CC9311).